A 1231-amino-acid polypeptide reads, in one-letter code: Protein FAM193A (1231 aa).

Residues 106–142 (CTEDMYSTLLQRYQRSEEELRKVAEEWLECQKRIDAY) are a coiled coil. The tract at residues 249 to 272 (DYLSEMRPPSVSSASSGSGSSSPI) is disordered. The span at 258-270 (SVSSASSGSGSSS) shows a compositional bias: low complexity. Ser-293 carries the post-translational modification Phosphoserine. Disordered regions lie at residues 331 to 405 (NGGG…QAEQ), 633 to 703 (QSSS…APSF), 719 to 789 (SFCP…NQKE), 826 to 845 (LTKR…EREG), and 860 to 1174 (NSSE…SSLD). A compositionally biased stretch (acidic residues) spans 355-365 (EADDEDADGES). Ser-648 carries the phosphoserine modification. A compositionally biased stretch (low complexity) spans 676–691 (LAPLPALSPSALSPAS). Over residues 761–773 (QQDDGDESADEDS) the composition is skewed to acidic residues. Residues 776–785 (EHSSSTSTST) are compositionally biased toward low complexity. Over residues 872–881 (AAKRARHKQR) the composition is skewed to basic residues. A coiled-coil region spans residues 877-973 (RHKQRKLEEK…ATESISNSEN (97 aa)). Positions 882 to 909 (KLEEKARLEAEARAREHLHHQEEQKQRE) are enriched in basic and acidic residues. A compositionally biased stretch (acidic residues) spans 910 to 920 (EEEDEEEEDEE). The span at 921-935 (QHFKEEFQRLQELQK) shows a compositional bias: basic and acidic residues. The segment covering 937-946 (RAAKKKKKDR) has biased composition (basic residues). A compositionally biased stretch (polar residues) spans 962–979 (QAATESISNSENIHNGSL). Ser-1136 and Ser-1151 each carry phosphoserine. Over residues 1156 to 1166 (GKNKKNKKKKG) the composition is skewed to basic residues.

Belongs to the FAM193 family.

In Mus musculus (Mouse), this protein is Protein FAM193A (Fam193a).